Here is an 807-residue protein sequence, read N- to C-terminus: cAMP-regulated phosphoprotein 21 (807 aa).

A disordered region spans residues 1 to 127 (MSEQGGLTPT…KNREKLSERP (127 aa)). The residue at position 2 (serine 2) is an N-acetylserine. Serine 32 carries the post-translational modification Phosphoserine. Residues 32–57 (SLDEEEKLELQRRLAAQNQERRKSKS) are a coiled coil. Serine 55 is modified (phosphoserine; by PKA). The segment covering 89–98 (IHLQLSSFPS) has biased composition (polar residues). Residues 101-127 (EEDKSRKDDSEREKEKDKNREKLSERP) are compositionally biased toward basic and acidic residues. Serine 133 is modified (phosphoserine). The 64-residue stretch at 163-226 (RMILLKMEQE…SVIINKTSST (64 aa)) folds into the R3H domain. One can recognise an SUZ domain in the interval 227–298 (RIPEQRFCEH…VRERIFAHDS (72 aa)). A disordered region spans residues 245-282 (SQKRFILKRDNSSIDKEDNQNRMHPFRDDRRSKSIEER). 2 positions are modified to phosphoserine: asparagine 265 and serine 298. 4 disordered regions span residues 328–434 (LFRA…TSSV), 474–536 (GSIL…QPQM), 552–576 (SQLS…YPAS), and 595–627 (QLST…QQPP). Over residues 337–348 (GRTSGSRQSSSE) the composition is skewed to low complexity. Residues 349–358 (TELRWPDHQR) show a composition bias toward basic and acidic residues. A compositionally biased stretch (polar residues) spans 359 to 380 (AWSSTDSDSSNRNLKPTMTKTA). 2 positions are modified to phosphoserine: serine 361 and serine 381. Residues 401–421 (GKLSKTGSESSSSAGSSGSLS) are compositionally biased toward low complexity. Polar residues predominate over residues 422–434 (RTHPQSTALTSSV). Over residues 514 to 524 (QQPPQQQPSPQ) the composition is skewed to pro residues. Residues 525 to 535 (PQQQVQASQPQ) show a composition bias toward low complexity. Polar residues-rich tracts occupy residues 552 to 563 (SQLSMSRQSSGD) and 595 to 613 (QLST…QQVL). The residue at position 557 (serine 557) is a Phosphoserine. The residue at position 650 (arginine 650) is an Asymmetric dimethylarginine.

Interacts with CALM1. Post-translationally, phosphorylation of isoform 2 at Ser-55 is enhanced upon dopamine D1 receptor activation and favors interaction with CALM1. Methylated by CARM1 at Arg-650 in immature thymocytes. As to expression, present at high levels in thymus and low levels in brain. In thymus, isoform 1 is specifically found in immature thymocytes (at protein level).

The protein resides in the cytoplasm. May act as a competitive inhibitor of calmodulin-dependent enzymes such as calcineurin in neurons. This is cAMP-regulated phosphoprotein 21 (Arpp21) from Mus musculus (Mouse).